We begin with the raw amino-acid sequence, 195 residues long: Pyridoxal 5'-phosphate synthase subunit PdxT (195 aa).

46–48 lines the L-glutamine pocket; sequence GES. The Nucleophile role is filled by cysteine 78. L-glutamine is bound by residues arginine 105 and 133–134; that span reads IR. Residues histidine 169 and glutamate 171 each act as charge relay system in the active site.

It belongs to the glutaminase PdxT/SNO family. As to quaternary structure, in the presence of PdxS, forms a dodecamer of heterodimers. Only shows activity in the heterodimer.

It carries out the reaction aldehydo-D-ribose 5-phosphate + D-glyceraldehyde 3-phosphate + L-glutamine = pyridoxal 5'-phosphate + L-glutamate + phosphate + 3 H2O + H(+). The enzyme catalyses L-glutamine + H2O = L-glutamate + NH4(+). It participates in cofactor biosynthesis; pyridoxal 5'-phosphate biosynthesis. In terms of biological role, catalyzes the hydrolysis of glutamine to glutamate and ammonia as part of the biosynthesis of pyridoxal 5'-phosphate. The resulting ammonia molecule is channeled to the active site of PdxS. This Geobacillus thermodenitrificans (strain NG80-2) protein is Pyridoxal 5'-phosphate synthase subunit PdxT.